Consider the following 232-residue polypeptide: MIEDKRWGGVYSFEDSPYIMEILTELRDKDTDSIKFRKGLVKLGRYMGYEITKTMDVEKVKVETPLEETEGIIVKDRRNVVIITVLRAAIPFMEGLIKVFEHARVGIVSAARGKPPKFEIEMNYIKIPQITPEDTVIVADPMIATGSTLLRVLEEVKKYGTPKRTLVVGVLAAPEGITRIKEKFPEVEIFVAKIDRELNDKGYILPGLGDAGDRAFGEPVKITTLPQVHYIE.

38 to 42 (KGLVK) serves as a coordination point for GTP. 5-phospho-alpha-D-ribose 1-diphosphate contacts are provided by residues Arg-87, Arg-112, and 140–148 (DPMIATGST). Residues Ile-204 and 209–211 (GDA) contribute to the uracil site. Residue Asp-210 coordinates 5-phospho-alpha-D-ribose 1-diphosphate.

The protein belongs to the UPRTase family. Mg(2+) is required as a cofactor.

It carries out the reaction UMP + diphosphate = 5-phospho-alpha-D-ribose 1-diphosphate + uracil. The protein operates within pyrimidine metabolism; UMP biosynthesis via salvage pathway; UMP from uracil: step 1/1. Its activity is regulated as follows. Allosterically activated by GTP. Its function is as follows. Catalyzes the conversion of uracil and 5-phospho-alpha-D-ribose 1-diphosphate (PRPP) to UMP and diphosphate. In Pyrococcus furiosus (strain ATCC 43587 / DSM 3638 / JCM 8422 / Vc1), this protein is Uracil phosphoribosyltransferase.